A 97-amino-acid chain; its full sequence is Defective intron-associated endonuclease 3 (97 aa).

This endonuclease is specific to the nrdB gene splice junction and is involved in intron homing. This Escherichia coli (Bacteriophage T4) protein is Defective intron-associated endonuclease 3 (ITEVIIIR).